Consider the following 153-residue polypeptide: Ribonuclease H (153 aa).

The 141-residue stretch at 1–141 (MKLVEIFTDG…CDELAKAGAN (141 aa)) folds into the RNase H type-1 domain. 4 residues coordinate Mg(2+): D9, E47, D69, and D133.

This sequence belongs to the RNase H family. As to quaternary structure, monomer. Mg(2+) serves as cofactor.

It localises to the cytoplasm. The catalysed reaction is Endonucleolytic cleavage to 5'-phosphomonoester.. Endonuclease that specifically degrades the RNA of RNA-DNA hybrids. This chain is Ribonuclease H, found in Actinobacillus pleuropneumoniae serotype 5b (strain L20).